Consider the following 450-residue polypeptide: Chromosomal replication initiator protein DnaA (450 aa).

Residues M1–I73 are domain I, interacts with DnaA modulators. Residues I73 to L104 are domain II. The interval A105–A326 is domain III, AAA+ region. 4 residues coordinate ATP: G149, G151, K152, and T153. Residues V327–R450 form a domain IV, binds dsDNA region.

It belongs to the DnaA family. In terms of assembly, oligomerizes as a right-handed, spiral filament on DNA at oriC.

It localises to the cytoplasm. Plays an essential role in the initiation and regulation of chromosomal replication. ATP-DnaA binds to the origin of replication (oriC) to initiate formation of the DNA replication initiation complex once per cell cycle. Binds the DnaA box (a 9 base pair repeat at the origin) and separates the double-stranded (ds)DNA. Forms a right-handed helical filament on oriC DNA; dsDNA binds to the exterior of the filament while single-stranded (ss)DNA is stabiized in the filament's interior. The ATP-DnaA-oriC complex binds and stabilizes one strand of the AT-rich DNA unwinding element (DUE), permitting loading of DNA polymerase. After initiation quickly degrades to an ADP-DnaA complex that is not apt for DNA replication. Binds acidic phospholipids. This is Chromosomal replication initiator protein DnaA from Spiroplasma citri.